Reading from the N-terminus, the 317-residue chain is Gluconeogenesis factor (317 aa).

It belongs to the gluconeogenesis factor family.

It is found in the cytoplasm. Required for morphogenesis under gluconeogenic growth conditions. Required, in gluconeogenic growth conditions, for the correct localization of PBP1 and hence for displaying a normal rod shape. This is Gluconeogenesis factor (mgfK) from Bacillus subtilis (strain 168).